Reading from the N-terminus, the 808-residue chain is Potassium transporter 5 (808 aa).

Residues 1–65 (MAEEVGETRG…NQVNWKKTLS (65 aa)) are Cytoplasmic-facing. A helical transmembrane segment spans residues 66–86 (LTFQSIGVVYGDIGTSPLYVY). Topologically, residues 87–102 (ESTFPDKIGSKEDILG) are extracellular. A helical transmembrane segment spans residues 103–123 (VLSLIIYTLVLLPMLKYVFIV). Topologically, residues 124–189 (LRANDNGDGG…EKMENSKNIK (66 aa)) are cytoplasmic. The helical transmembrane segment at 190–210 (ILLFLVTILGTSMVIGDGVLT) threads the bilayer. Residues 211-221 (PCISVLSAVSG) are Extracellular-facing. The chain crosses the membrane as a helical span at residues 222–242 (IGSLGQDAVVGISIAILIVLF). The Cytoplasmic portion of the chain corresponds to 243 to 251 (CAQRLGTDK). The chain crosses the membrane as a helical span at residues 252-272 (VGFSFAPIILLWFSFIGGIGL). Topologically, residues 273–302 (YNLFKYDVSVLRAFNPKYMFDYFKRNGKQG) are extracellular. Residues 303-323 (WISLGGVVLAVTGTEAMFADL) traverse the membrane as a helical segment. At 324 to 327 (GHFN) the chain is on the cytoplasmic side. The helical transmembrane segment at 328-348 (VQAIQISFSGIVFPALLCAYA) threads the bilayer. Over 349–379 (GQAAYLTKFPDDVSKTFYKSIPDPLYWPTFV) the chain is Extracellular. Residues 380 to 400 (VAVAAAIIASQAMISGAFAII) form a helical membrane-spanning segment. Residues 401–424 (SQSLSLGCFPRVKVIHTSAKYEGQ) lie on the Cytoplasmic side of the membrane. A helical membrane pass occupies residues 425-445 (VYIPEVNYILMIACIMVCLGF). Topologically, residues 446-456 (KTTEKIGNAYG) are extracellular. Residues 457 to 477 (IAVVAVMVITTCMVTIIMLVV) traverse the membrane as a helical segment. Residues 478–482 (WRTKM) lie on the Cytoplasmic side of the membrane. A helical membrane pass occupies residues 483-503 (IWIAFFFFGFICIEAVYLSSV). The Extracellular segment spans residues 504–510 (LYKFKDG). Residues 511–531 (GFLPLAFSFFLMIIMGIWHYI) traverse the membrane as a helical segment. Residues 532–808 (HKERYMYELK…LLRVGMTYEI (277 aa)) are Cytoplasmic-facing. A disordered region spans residues 699-722 (LQQPNPSRVSSGSIHSNSGIKSTK).

The protein belongs to the HAK/KUP transporter (TC 2.A.72.3) family. Expressed in the roots.

The protein resides in the cell membrane. The enzyme catalyses K(+)(in) = K(+)(out). High-affinity potassium transporter that functions under low potassium conditions. Involved in the positive regulation of salt tolerance under salt stress. The polypeptide is Potassium transporter 5 (Manihot esculenta (Cassava)).